The following is a 549-amino-acid chain: MLPDKKAFKESLKALKKHVTQDKVCDIRQHFSEDEQRFARLSIRLDDLLFDFSKCGVTLDTLQLLDNLAIAADVLGKREAMFSGKIINTTEKRSVLHIALRLAADKVFILNDRDIVQDIQSVLARMVKFSKMIRDGSYKGYSGERITDIVNIGIGGSDLGPAMVTSALKPYHDGPHCHFVSSVDSAHITDILADLNPATTLFIIASKTFTTTETIENARVARQWIHSHLGENAVGVHFVAVSSAIDKAIEFGIDSSRIFEFWDWVGGRYSIWSAIGLVVMLAIGDQNFRQFLEGARQMDQHFKDTPLHQNIPIRFALLGFWHRVICGYSSRAIVPYEQRLVRFPAYLQQLDMESNGKHVSLEGRPITFSTGPVVWGDSGSNGQHAFFQFLHQGTDIVPVEFILFVKGHEPNLNHMHDILVANCLAQSEALMKGRSHEDVYHTLMNDGGESDEADNLAFHKSLQGNRPSIMLIQDLLTPFTLGRLMALYEHRIFVEGILMNINSFDQWGVELGKEFANELLPVIRGENEADNRDGSTLGLLKHIQNRYVE.

The Proton donor role is filled by Glu-353. Residues His-384 and Lys-513 contribute to the active site.

It belongs to the GPI family.

The protein resides in the cytoplasm. It carries out the reaction alpha-D-glucose 6-phosphate = beta-D-fructose 6-phosphate. The protein operates within carbohydrate biosynthesis; gluconeogenesis. It participates in carbohydrate degradation; glycolysis; D-glyceraldehyde 3-phosphate and glycerone phosphate from D-glucose: step 2/4. Catalyzes the reversible isomerization of glucose-6-phosphate to fructose-6-phosphate. In Bartonella bacilliformis (strain ATCC 35685 / KC583 / Herrer 020/F12,63), this protein is Glucose-6-phosphate isomerase.